Reading from the N-terminus, the 387-residue chain is Deoxyguanosinetriphosphate triphosphohydrolase-like protein (387 aa).

The 132-residue stretch at 78 to 209 folds into the HD domain; that stretch reads RLTHSLEVAQ…ANLADEVAYN (132 aa).

The protein belongs to the dGTPase family. Type 2 subfamily.

In Ralstonia nicotianae (strain ATCC BAA-1114 / GMI1000) (Ralstonia solanacearum), this protein is Deoxyguanosinetriphosphate triphosphohydrolase-like protein.